Consider the following 538-residue polypeptide: (R)-citramalate synthase (538 aa).

The region spanning 3 to 268 (IKVYDTTLRD…IPKENLKKLF (266 aa)) is the Pyruvate carboxyltransferase domain.

Belongs to the alpha-IPM synthase/homocitrate synthase family.

It catalyses the reaction pyruvate + acetyl-CoA + H2O = (3R)-citramalate + CoA + H(+). It participates in amino-acid biosynthesis; L-isoleucine biosynthesis; 2-oxobutanoate from pyruvate: step 1/3. Functionally, catalyzes the condensation of pyruvate and acetyl-coenzyme A to form (R)-citramalate. The sequence is that of (R)-citramalate synthase from Thermotoga maritima (strain ATCC 43589 / DSM 3109 / JCM 10099 / NBRC 100826 / MSB8).